Here is a 361-residue protein sequence, read N- to C-terminus: Large ribosomal subunit protein uL3 (361 aa).

Positions 339–361 are disordered; sequence RPPKKKPPVQRPQITYVSVESKQ. Positions 350-361 are enriched in polar residues; it reads PQITYVSVESKQ.

Belongs to the universal ribosomal protein uL3 family. Part of the 50S ribosomal subunit. Forms a cluster with proteins L14 and L24e.

One of the primary rRNA binding proteins, it binds directly near the 3'-end of the 23S rRNA, where it nucleates assembly of the 50S subunit. This Pyrococcus abyssi (strain GE5 / Orsay) protein is Large ribosomal subunit protein uL3.